We begin with the raw amino-acid sequence, 232 residues long: H-2 class II histocompatibility antigen, E-S beta chain (232 aa).

The beta-1 stretch occupies residues 1–90 (WFLEYSTSEC…LDKFLVPRRV (90 aa)). Residues 1-193 (WFLEYSTSEC…KAQSTSAQNK (193 aa)) are Extracellular-facing. Disulfide bonds link cysteine 10/cysteine 74 and cysteine 112/cysteine 168. Residue asparagine 14 is glycosylated (N-linked (GlcNAc...) asparagine). Positions 91 to 193 (EPTVTVYPTK…KAQSTSAQNK (103 aa)) are beta-2. Positions 92-182 (PTVTVYPTKT…PSLTDPVTVE (91 aa)) constitute an Ig-like C1-type domain. The chain crosses the membrane as a helical span at residues 194 to 216 (MLSGVGGFVLGLLFLGAGLFIYF). Topologically, residues 217-232 (RNQKGQSGLQPTGLLS) are cytoplasmic.

The protein belongs to the MHC class II family. Ubiquitinated in immature dendritic cells leading to down-regulation of MHC class II.

The protein resides in the membrane. This is H-2 class II histocompatibility antigen, E-S beta chain (H2-Eb1) from Mus musculus (Mouse).